A 1866-amino-acid chain; its full sequence is Protein NLRC5 (1866 aa).

The segment at 105 to 135 (GAEGKSQPESQLHHGLKRPHQSCGSSPRRKQ) is disordered. The NACHT domain maps to 222 to 539 (RVTVLLGKAG…PKVNKDTLTQ (318 aa)). 228-235 (GKAGMGKT) contributes to the ATP binding site. LRR repeat units lie at residues 599–622 (LKKL…VDET), 713–737 (MGRL…LVKA), 741–765 (CPQL…IVEV), 769–792 (LPRL…CLAR), 869–892 (GPHL…LMAE), 897–921 (LHIA…VLRA), 930–953 (ELHI…EQKG), 976–1000 (SRRM…ALGG), 1004–1026 (LGHL…RLAQ), 1031–1058 (LGAL…CFST), 1138–1161 (LELQ…CLPQ), 1162–1184 (LPQL…FLLA), 1242–1265 (CKDL…CLLE), 1272–1294 (ISGL…LLET), 1462–1488 (CARL…LLQS), 1493–1516 (LSEL…HLAS), 1521–1544 (CHHL…ALMR), 1554–1577 (RLDL…LSQM), 1578–1600 (TCLQ…HLSE), 1605–1628 (ATSL…HLAT), 1633–1656 (LPEL…QLAE), 1661–1684 (CRRL…GLAQ), 1687–1714 (PQHL…ALDG), 1715–1739 (SPHL…CMEL), 1741–1762 (LLRQ…LLTS), and 1795–1818 (MGRL…LLAE).

It belongs to the NLRP family. As to quaternary structure, interacts with CHUK and IKBKB; prevents CHUK and IKBKB phosphorylation and inhibits their kinase activity. Interacts with RIGI and IFIH1; blocks the interaction of MAVS to RIGI. In terms of tissue distribution, expressed in spleen, thymus, lung, brain, tonsil, heart and prostate.

It is found in the cytoplasm. In terms of biological role, probable regulator of the NF-kappa-B and type I interferon signaling pathways. May also regulate the type II interferon signaling pathway. Plays a role in homeostatic control of innate immunity and in antiviral defense mechanisms. The protein is Protein NLRC5 (NLRC5) of Homo sapiens (Human).